Consider the following 605-residue polypeptide: F-box/WD repeat-containing protein 1A (605 aa).

The interval 128–177 (ASYEKEKELCVKYFEQWSESDQVEFVEHLISQMCHYQHGHINSYLKPMLQ) is homodimerization domain D. One can recognise an F-box domain in the interval 190–228 (DHIAENILSYLDAKSLCAAELVCKEWYRVTSDGMLWKKL). The tract at residues 190-228 (DHIAENILSYLDAKSLCAAELVCKEWYRVTSDGMLWKKL) is required for down-regulation of SNAI1. WD repeat units lie at residues 301–338 (ETSK…CKRI), 341–378 (GHTG…MLNT), 381–418 (HHCE…DITL), 424–461 (GHRA…FVRT), 464–503 (GHKR…RVLE), 505–541 (HEEL…DPRA), and 553–590 (EHSG…AAQA).

As to quaternary structure, homodimer. Self-associates. Component of the SCF(BTRC) complex formed of CUL1, SKP1, RBX1 and a BTRC dimer. Direct interaction with SKP1 occurs via the F-box domain. Interacts with phosphorylated ubiquitination substrates SMAD3 and SMAD4. Interacts with phosphorylated ubiquitination substrates CTNNB1, NFKBIA, NFKBIB, NFKBIE, NFKB1/nuclear factor NF-kappa-B p105 subunit, ATF4, CDC25A, DLG1, FBXO5 and SNAI1; the interaction requires the phosphorylation of the 2 serine residues in the substrate destruction motif D-S-G-X(2,3,4)-S. Binds UBQLN1. Interacts with CDC34 and UBE2R2. Interacts with FBXW11. Interacts with CUL4A and DDB1. Part of a SCF(BTRC)-like complex lacking CUL1, which is associated with phosphorylated NKBIA and RELA; RELA interacts directly with NFKBIA. Interacts with the phosphorylated form of GLI3. Interacts with CLU. Interacts with PER1 (phosphorylated), PER2 (phosphorylated) and PER3. Interacts with phosphorylated ubiquitination substrate CEP68. Interacts with ZC3H12A; this interaction occurs when ZC3H12A is phosphorylated in a IKBKB/IKKB-dependent manner. Interacts with HSF1; this interaction occurs during mitosis and induces HSF1 ubiquitin-dependent degradation, a process inhibited by CDC20. Interacts with NFE2L1. Interacts with INAVA. Interacts with IL10RA; this interaction leads to IL10RA ubiquitination and subsequent degradation. Interacts with REST. Interacts with KLF4; this interaction leads to KLF4 ubiquitination and subsequent degradation. Interacts with UBR2, as part of a SCF(BTRC) complex; the interaction mediates 'Lys-48'-linked ubiquitination of UBR2 and is regulated by DUSP22 in the T-cell receptor signaling pathway. In terms of assembly, (Microbial infection) Interacts with vaccinia virus A49; this interaction inhibits NF-kappa-B activation. (Microbial infection) Interacts with HIV-1 Vpu. Post-translationally, ubiquitinated. Deubiquitinated by OTUD5, promoting its stability. In terms of tissue distribution, expressed in epididymis (at protein level).

The protein resides in the cytoplasm. It is found in the nucleus. The protein operates within protein modification; protein ubiquitination. Substrate recognition component of a SCF (SKP1-CUL1-F-box protein) E3 ubiquitin-protein ligase complex which mediates the ubiquitination and subsequent proteasomal degradation of target proteins. Recognizes and binds to phosphorylated target proteins. SCF(BTRC) mediates the ubiquitination of CTNNB1 and participates in Wnt signaling. SCF(BTRC) mediates the ubiquitination of phosphorylated NFKB1, ATF4, CDC25A, DLG1, FBXO5, PER1, SMAD3, SMAD4, SNAI1 and probably NFKB2. SCF(BTRC) mediates the ubiquitination of NFKBIA, NFKBIB and NFKBIE; the degradation frees the associated NFKB1 to translocate into the nucleus and to activate transcription. Ubiquitination of NFKBIA occurs at 'Lys-21' and 'Lys-22'. The SCF(FBXW11) complex also regulates NF-kappa-B by mediating ubiquitination of phosphorylated NFKB1: specifically ubiquitinates the p105 form of NFKB1, leading to its degradation. SCF(BTRC) mediates the ubiquitination of CEP68; this is required for centriole separation during mitosis. SCF(BTRC) mediates the ubiquitination and subsequent degradation of nuclear NFE2L1. Has an essential role in the control of the clock-dependent transcription via degradation of phosphorylated PER1 and PER2. May be involved in ubiquitination and subsequent proteasomal degradation through a DBB1-CUL4 E3 ubiquitin-protein ligase. Required for activation of NFKB-mediated transcription by IL1B, MAP3K14, MAP3K1, IKBKB and TNF. Required for proteolytic processing of GLI3. Mediates ubiquitination of REST, thereby leading to its proteasomal degradation. SCF(BTRC) mediates the ubiquitination and subsequent proteasomal degradation of KLF4; thereby negatively regulating cell pluripotency maintenance and embryogenesis. SCF(BTRC) acts as a regulator of mTORC1 signaling pathway by catalyzing ubiquitination and subsequent proteasomal degradation of phosphorylated DEPTOR, TFE3 and MITF. SCF(BTRC) directs 'Lys-48'-linked ubiquitination of UBR2 in the T-cell receptor signaling pathway. The protein is F-box/WD repeat-containing protein 1A (BTRC) of Homo sapiens (Human).